Reading from the N-terminus, the 188-residue chain is Elongation factor P (188 aa).

The protein belongs to the elongation factor P family.

It localises to the cytoplasm. It participates in protein biosynthesis; polypeptide chain elongation. Its function is as follows. Involved in peptide bond synthesis. Stimulates efficient translation and peptide-bond synthesis on native or reconstituted 70S ribosomes in vitro. Probably functions indirectly by altering the affinity of the ribosome for aminoacyl-tRNA, thus increasing their reactivity as acceptors for peptidyl transferase. The sequence is that of Elongation factor P (efp) from Rickettsia conorii (strain ATCC VR-613 / Malish 7).